The chain runs to 304 residues: Nod factor export ATP-binding protein I (304 aa).

The region spanning 6-236 is the ABC transporter domain; sequence IDFQQVEKRY…EIGCDVIEIY (231 aa). 38-45 is a binding site for ATP; it reads GPNGAGKT.

This sequence belongs to the ABC transporter superfamily. Lipooligosaccharide exporter (TC 3.A.1.102) family. As to quaternary structure, the complex is composed of two ATP-binding proteins (NodI) and two transmembrane proteins (NodJ).

The protein resides in the cell inner membrane. Its function is as follows. Part of the ABC transporter complex NodIJ involved in the export of the nodulation factors (Nod factors), the bacterial signal molecules that induce symbiosis and subsequent nodulation induction. Nod factors are LCO (lipo-chitin oligosaccharide), a modified beta-1,4-linked N-acetylglucosamine oligosaccharide. This subunit is responsible for energy coupling to the transport system. This is Nod factor export ATP-binding protein I from Burkholderia pseudomallei (strain 1710b).